Here is a 112-residue protein sequence, read N- to C-terminus: MKFVAAYLLAVLAGNASPSADDLTAILESVGCEVDNEKMELLLSQLSGKDITELIAAGREKFASVPCGGGGVAVAAAAPAAGGAAPAAEAKKEEKVEEKEESDDDMGFSLFD.

The interval 83–112 is disordered; the sequence is GAAPAAEAKKEEKVEEKEESDDDMGFSLFD. Positions 89-98 are enriched in basic and acidic residues; that stretch reads EAKKEEKVEE.

This sequence belongs to the eukaryotic ribosomal protein P1/P2 family. In terms of assembly, P1 and P2 exist as dimers at the large ribosomal subunit. Phosphorylated.

Its function is as follows. Plays an important role in the elongation step of protein synthesis. The chain is Large ribosomal subunit protein P2A (RPP2A) from Zea mays (Maize).